The primary structure comprises 93 residues: Acylphosphatase (93 aa).

The region spanning 6 to 93 (RARIVVSGRV…GDLGAFEIRF (88 aa)) is the Acylphosphatase-like domain. Catalysis depends on residues Arg21 and Asn39.

Belongs to the acylphosphatase family.

The catalysed reaction is an acyl phosphate + H2O = a carboxylate + phosphate + H(+). The protein is Acylphosphatase (acyP) of Anaeromyxobacter dehalogenans (strain 2CP-C).